The sequence spans 308 residues: tRNA dimethylallyltransferase (308 aa).

ATP is bound at residue 8–15 (GPTGTGKS). 10–15 (TGTGKS) provides a ligand contact to substrate.

It belongs to the IPP transferase family. Monomer. Requires Mg(2+) as cofactor.

It catalyses the reaction adenosine(37) in tRNA + dimethylallyl diphosphate = N(6)-dimethylallyladenosine(37) in tRNA + diphosphate. In terms of biological role, catalyzes the transfer of a dimethylallyl group onto the adenine at position 37 in tRNAs that read codons beginning with uridine, leading to the formation of N6-(dimethylallyl)adenosine (i(6)A). The sequence is that of tRNA dimethylallyltransferase from Mycolicibacterium vanbaalenii (strain DSM 7251 / JCM 13017 / BCRC 16820 / KCTC 9966 / NRRL B-24157 / PYR-1) (Mycobacterium vanbaalenii).